Reading from the N-terminus, the 351-residue chain is N-acetyl-gamma-glutamyl-phosphate reductase (351 aa).

Cys154 is an active-site residue.

The protein belongs to the NAGSA dehydrogenase family. Type 1 subfamily.

It localises to the cytoplasm. It carries out the reaction N-acetyl-L-glutamate 5-semialdehyde + phosphate + NADP(+) = N-acetyl-L-glutamyl 5-phosphate + NADPH + H(+). The protein operates within amino-acid biosynthesis; L-arginine biosynthesis; N(2)-acetyl-L-ornithine from L-glutamate: step 3/4. Catalyzes the NADPH-dependent reduction of N-acetyl-5-glutamyl phosphate to yield N-acetyl-L-glutamate 5-semialdehyde. This is N-acetyl-gamma-glutamyl-phosphate reductase from Prochlorococcus marinus (strain AS9601).